An 82-amino-acid chain; its full sequence is Beta-defensin 119 (82 aa).

Positions 1 to 19 are cleaved as a signal peptide; sequence MKFFLFFVILLAMEPVISG. Intrachain disulfides connect C26–C53, C33–C47, and C37–C54.

This sequence belongs to the beta-defensin family.

The protein localises to the secreted. In terms of biological role, has antibacterial activity. The sequence is that of Beta-defensin 119 (DEFB119) from Canis lupus familiaris (Dog).